Reading from the N-terminus, the 474-residue chain is tRNA-2-methylthio-N(6)-dimethylallyladenosine synthase (474 aa).

The region spanning 3–120 (KKLHIKTWGC…LPEMIDQIRD (118 aa)) is the MTTase N-terminal domain. Residues Cys-12, Cys-49, Cys-83, Cys-157, Cys-161, and Cys-164 each contribute to the [4Fe-4S] cluster site. Positions 143–375 (RADGPSAFVS…QDRITQQAMR (233 aa)) constitute a Radical SAM core domain. The region spanning 378 to 441 (RQMLGTVQRI…TNSLRGTFVR (64 aa)) is the TRAM domain.

Belongs to the methylthiotransferase family. MiaB subfamily. Monomer. [4Fe-4S] cluster is required as a cofactor.

The protein resides in the cytoplasm. It catalyses the reaction N(6)-dimethylallyladenosine(37) in tRNA + (sulfur carrier)-SH + AH2 + 2 S-adenosyl-L-methionine = 2-methylsulfanyl-N(6)-dimethylallyladenosine(37) in tRNA + (sulfur carrier)-H + 5'-deoxyadenosine + L-methionine + A + S-adenosyl-L-homocysteine + 2 H(+). Catalyzes the methylthiolation of N6-(dimethylallyl)adenosine (i(6)A), leading to the formation of 2-methylthio-N6-(dimethylallyl)adenosine (ms(2)i(6)A) at position 37 in tRNAs that read codons beginning with uridine. This Shewanella sediminis (strain HAW-EB3) protein is tRNA-2-methylthio-N(6)-dimethylallyladenosine synthase.